Here is a 288-residue protein sequence, read N- to C-terminus: 4-hydroxy-tetrahydrodipicolinate synthase (288 aa).

T42 contacts pyruvate. The Proton donor/acceptor role is filled by Y129. K158 functions as the Schiff-base intermediate with substrate in the catalytic mechanism. I200 contributes to the pyruvate binding site.

It belongs to the DapA family. Homotetramer; dimer of dimers.

The protein localises to the cytoplasm. The enzyme catalyses L-aspartate 4-semialdehyde + pyruvate = (2S,4S)-4-hydroxy-2,3,4,5-tetrahydrodipicolinate + H2O + H(+). The protein operates within amino-acid biosynthesis; L-lysine biosynthesis via DAP pathway; (S)-tetrahydrodipicolinate from L-aspartate: step 3/4. In terms of biological role, catalyzes the condensation of (S)-aspartate-beta-semialdehyde [(S)-ASA] and pyruvate to 4-hydroxy-tetrahydrodipicolinate (HTPA). This Thermosipho melanesiensis (strain DSM 12029 / CIP 104789 / BI429) protein is 4-hydroxy-tetrahydrodipicolinate synthase.